A 177-amino-acid chain; its full sequence is SPbeta prophage-derived uncharacterized N-acetyltransferase YokL (177 aa).

The region spanning 11 to 170 (LTLRAIQPED…DGICFGMTRE (160 aa)) is the N-acetyltransferase domain.

The protein belongs to the acetyltransferase family.

The protein is SPbeta prophage-derived uncharacterized N-acetyltransferase YokL (yokL) of Bacillus subtilis (strain 168).